A 324-amino-acid chain; its full sequence is Histidine N-acetyltransferase (324 aa).

The N-acetyltransferase domain maps to 15-151; the sequence is FEFVLAAEKE…GILLLSFNAP (137 aa).

It catalyses the reaction L-histidine + acetyl-CoA = N(alpha)-acetyl-L-histidine + CoA + H(+). Its function is as follows. Enzyme responsible for the N-acetyl-histidine (NAH) synthesis, which is a major constituent of brain and lens of ectothermic vertebrates. The protein is Histidine N-acetyltransferase (hisat) of Xenopus tropicalis (Western clawed frog).